Here is a 351-residue protein sequence, read N- to C-terminus: Probable minor fimbrial subunit LpfD (351 aa).

The signal sequence occupies residues 1-22; that stretch reads MKAAIALSLLGCVFGFSGKAFA.

The protein belongs to the fimbrial protein family.

Its subcellular location is the fimbrium. Functionally, part of the lpfABCC'DE fimbrial operon. LP fimbriae may participate in the interaction with eukaryotic cells by assisting in microcolony formation. The protein is Probable minor fimbrial subunit LpfD (lpfD) of Escherichia coli O157:H7.